The primary structure comprises 316 residues: CD276 antigen (316 aa).

Residues 1-28 (MLRGWGGPSVGVSMGTALGVLCLCLTGA) form the signal peptide. One can recognise an Ig-like V-type domain in the interval 29–139 (VEVQVSEDPV…DSAAVSLQVA (111 aa)). Residues 29–248 (VEVQVSEDPV…GQPMTFPPEA (220 aa)) lie on the Extracellular side of the membrane. Residues asparagine 104, asparagine 189, and asparagine 215 are each glycosylated (N-linked (GlcNAc...) asparagine). The 94-residue stretch at 145–238 (PSMTLEPNKD…QDAHGSVTIT (94 aa)) folds into the Ig-like C2-type domain. Cysteine 165 and cysteine 220 form a disulfide bridge. Residues 249-269 (LWVTVGLSVCLVILLVALAFV) form a helical membrane-spanning segment. Residues 270–316 (CWRKIKQSCEEENAGAEDQDGDGEGSKTALRPLKHSENKEDDGQEIA) lie on the Cytoplasmic side of the membrane. Residues 281-292 (ENAGAEDQDGDG) are compositionally biased toward acidic residues. The disordered stretch occupies residues 281 to 316 (ENAGAEDQDGDGEGSKTALRPLKHSENKEDDGQEIA).

This sequence belongs to the immunoglobulin superfamily. BTN/MOG family. Interacts with TREML2 and this interaction enhances T-cell activation.

It localises to the membrane. Its function is as follows. Modulates T-cell-mediated immune responses and the development of acute and chronic transplant rejection. May play a positive regulatory role in bone formation and has a dual role in the bone-immune interface. Induces antitumor immunity as it activates both acquired and innate immunity leading to natural killer cell and CD8 T-cell dependent killing of tumor cells. This is CD276 antigen (Cd276) from Rattus norvegicus (Rat).